The following is a 339-amino-acid chain: Dehydrogenase/reductase SDR family member 7 (339 aa).

Positions 1–28 are cleaved as a signal peptide; it reads MNWELLLWLLVLCALLLLLVQLLRFLRA. Positions 60 and 62 each coordinate NAD(+). Residue S190 participates in substrate binding. NAD(+) is bound by residues Y203, K207, and S239. The active-site Proton acceptor is the Y203.

It belongs to the short-chain dehydrogenases/reductases (SDR) family. As to expression, found predominantly in the adrenal glands, liver, thyroid, prostate, small intestine, colon, stomach, kidney and brain. Lower levels observed in skeletal muscle, the lung and the spleen.

The protein localises to the endoplasmic reticulum membrane. It catalyses the reaction all-trans-retinol + NADP(+) = all-trans-retinal + NADPH + H(+). It carries out the reaction 5alpha-androstane-3alpha,17beta-diol + NADP(+) = 17beta-hydroxy-5alpha-androstan-3-one + NADPH + H(+). Its function is as follows. NADPH-dependent oxidoreductase which catalyzes the reduction of a variety of compounds bearing carbonyl groups including steroids, retinoids and xenobiotics. Catalyzes the reduction/inactivation of 5alpha-dihydrotestosterone to 3alpha-androstanediol, with a possible role in the modulation of androgen receptor function. Involved in the reduction of all-trans-retinal to all-trans-retinol. Converts cortisone to 20beta-dihydrocortisone in vitro, although the physiological relevance of this activity is questionable. Reduces exogenous compounds such as quinones (1,2-naphtoquinone, 9,10-phenantrenequinone and benzoquinone) and other xenobiotics (alpha-diketones) in vitro, suggesting a role in the biotransformation of xenobiotics with carbonyl group. A dehydrogenase activity has not been detected so far. May play a role as tumor suppressor. In Homo sapiens (Human), this protein is Dehydrogenase/reductase SDR family member 7.